The following is a 64-amino-acid chain: Conotoxin Mr3.5 (64 aa).

A signal peptide spans 1-19; that stretch reads MSKLGVLLTICLLLFPLTA. A propeptide spanning residues 20–46 is cleaved from the precursor; the sequence is LPLDGDQPADQRAERTQAEKHSLPDPR. 3 disulfide bridges follow: cysteine 49–cysteine 58, cysteine 50–cysteine 62, and cysteine 54–cysteine 63. At cysteine 63 the chain carries Cysteine amide.

The protein belongs to the conotoxin M superfamily. In terms of tissue distribution, expressed by the venom duct.

The protein resides in the secreted. This chain is Conotoxin Mr3.5, found in Conus marmoreus (Marble cone).